Reading from the N-terminus, the 1494-residue chain is ABC multidrug transporter atrG (1494 aa).

The span at 1–11 (MSLLGTINPNL) shows a compositional bias: polar residues. 2 disordered regions span residues 1–48 (MSLL…RTSD) and 84–105 (FSVS…TLNP). A glycan (N-linked (GlcNAc...) asparagine) is linked at N41. 2 N-linked (GlcNAc...) asparagine glycosylation sites follow: N141 and N340. Positions 162 to 416 (LQVGALFRAV…FTTMGFECPE (255 aa)) constitute an ABC transporter 1 domain. 2 helical membrane passes run 527–547 (LTMS…SVFY) and 561–581 (ALLF…ILTL). N-linked (GlcNAc...) asparagine glycosylation is present at N622. The next 3 helical transmembrane spans lie at 636–656 (GPFF…SMLF), 669–689 (ALVP…FTIP), and 778–798 (GIMF…TEYI). N835 carries N-linked (GlcNAc...) asparagine glycosylation. The ABC transporter 2 domain maps to 852-1095 (FHWQDVCYDI…LASYFERNGA (244 aa)). 888–895 (GVSGAGKT) is an ATP binding site. A run of 5 helical transmembrane segments spans residues 1191–1211 (YIYS…FSFF), 1227–1247 (IFML…NFVT), 1276–1296 (LPWN…PIGL), 1312–1332 (LMWL…HMMI), and 1351–1371 (LCLI…FWIF). N-linked (GlcNAc...) asparagine glycans are attached at residues N1410 and N1432. The helical transmembrane segment at 1463–1483 (FGIMWAFIVFNIAAAVFIYWL) threads the bilayer.

The protein belongs to the ABC transporter superfamily. ABCG family. PDR (TC 3.A.1.205) subfamily.

The protein localises to the cell membrane. The enzyme catalyses (R)-miconazole(in) + ATP + H2O = (R)-miconazole(out) + ADP + phosphate + H(+). Functionally, pleiotropic ABC efflux transporter involved in the basal level of azole susceptibility. Confers resistance to miconazole and clotrimazole. The chain is ABC multidrug transporter atrG from Aspergillus oryzae (strain ATCC 42149 / RIB 40) (Yellow koji mold).